A 603-amino-acid chain; its full sequence is UvrABC system protein C (603 aa).

The region spanning 17 to 94 is the GIY-YIG domain; the sequence is TTSGCYKMLN…IKTHKPDYNV (78 aa).

Belongs to the UvrC family. As to quaternary structure, interacts with UvrB in an incision complex.

It localises to the cytoplasm. In terms of biological role, the UvrABC repair system catalyzes the recognition and processing of DNA lesions. UvrC both incises the 5' and 3' sides of the lesion. The N-terminal half is responsible for the 3' incision and the C-terminal half is responsible for the 5' incision. This Borreliella burgdorferi (strain ATCC 35210 / DSM 4680 / CIP 102532 / B31) (Borrelia burgdorferi) protein is UvrABC system protein C.